Here is a 590-residue protein sequence, read N- to C-terminus: Potassium-transporting ATPase potassium-binding subunit (590 aa).

The next 12 helical transmembrane spans lie at 3–23 (AFLL…KPLG), 63–83 (HYAL…YALQ), 134–154 (GLAV…IALI), 177–197 (VYVL…QGVI), 284–304 (FVQM…FGGM), 312–332 (WAVL…LAWA), 359–379 (FGIV…CGAV), 388–408 (ALGG…FGGV), 411–431 (GLYG…LMIG), 451–471 (IAIL…VVVT), 515–535 (LALG…VLAM), and 558–578 (LFVV…YIPA).

This sequence belongs to the KdpA family. As to quaternary structure, the system is composed of three essential subunits: KdpA, KdpB and KdpC.

The protein resides in the cell inner membrane. Its function is as follows. Part of the high-affinity ATP-driven potassium transport (or Kdp) system, which catalyzes the hydrolysis of ATP coupled with the electrogenic transport of potassium into the cytoplasm. This subunit binds the periplasmic potassium ions and delivers the ions to the membrane domain of KdpB through an intramembrane tunnel. The chain is Potassium-transporting ATPase potassium-binding subunit from Ralstonia pickettii (strain 12J).